The primary structure comprises 269 residues: Formamidopyrimidine-DNA glycosylase (269 aa).

The Schiff-base intermediate with DNA role is filled by proline 2. The active-site Proton donor is the glutamate 3. Lysine 57 functions as the Proton donor; for beta-elimination activity in the catalytic mechanism. DNA-binding residues include histidine 90, arginine 109, and lysine 150. The segment at 235 to 269 adopts an FPG-type zinc-finger fold; it reads QVYGRHGEPCYTCGEFIQIAKYGQRSSFFCPSCQN. Arginine 259 functions as the Proton donor; for delta-elimination activity in the catalytic mechanism.

This sequence belongs to the FPG family. In terms of assembly, monomer. Requires Zn(2+) as cofactor.

It carries out the reaction Hydrolysis of DNA containing ring-opened 7-methylguanine residues, releasing 2,6-diamino-4-hydroxy-5-(N-methyl)formamidopyrimidine.. The catalysed reaction is 2'-deoxyribonucleotide-(2'-deoxyribose 5'-phosphate)-2'-deoxyribonucleotide-DNA = a 3'-end 2'-deoxyribonucleotide-(2,3-dehydro-2,3-deoxyribose 5'-phosphate)-DNA + a 5'-end 5'-phospho-2'-deoxyribonucleoside-DNA + H(+). Involved in base excision repair of DNA damaged by oxidation or by mutagenic agents. Acts as a DNA glycosylase that recognizes and removes damaged bases. Has a preference for oxidized purines, such as 7,8-dihydro-8-oxoguanine (8-oxoG). Has AP (apurinic/apyrimidinic) lyase activity and introduces nicks in the DNA strand. Cleaves the DNA backbone by beta-delta elimination to generate a single-strand break at the site of the removed base with both 3'- and 5'-phosphates. This chain is Formamidopyrimidine-DNA glycosylase, found in Baumannia cicadellinicola subsp. Homalodisca coagulata.